Consider the following 299-residue polypeptide: Ribonuclease 3-like protein 3 (299 aa).

The RNase III domain occupies 39–183 (VAAVESLLGY…LIGAIYCDSN (145 aa)). Mg(2+) contacts are provided by Glu-79, Asp-169, and Glu-172. Residues 209 to 273 (HPVSELFEFC…AKAALDKLKE (65 aa)) enclose the DRBM domain. The tract at residues 274-299 (TLGQSQTEPMSAEVSEQFNKIDLTGS) is disordered. Over residues 275–291 (LGQSQTEPMSAEVSEQF) the composition is skewed to polar residues.

Requires Mg(2+) as cofactor. Mn(2+) is required as a cofactor.

Functionally, cleaves double-stranded RNA (dsRNA). This Oryza sativa subsp. japonica (Rice) protein is Ribonuclease 3-like protein 3.